A 201-amino-acid polypeptide reads, in one-letter code: UPF0301 protein Arad_1256 (201 aa).

Belongs to the UPF0301 (AlgH) family.

This Rhizobium rhizogenes (strain K84 / ATCC BAA-868) (Agrobacterium radiobacter) protein is UPF0301 protein Arad_1256.